The sequence spans 437 residues: Palmitoyltransferase PFA4 (437 aa).

The Cytoplasmic segment spans residues 1-12; the sequence is MAGLNDVPFIKG. The helical transmembrane segment at 13–33 threads the bilayer; sequence LAVPSVCALIIFLGYASQFLF. The Lumenal portion of the chain corresponds to 34–48; sequence NYSTTLEPGPPTRRE. A helical membrane pass occupies residues 49 to 69; the sequence is TIIFNGLLLVLWITYYRTVAT. Residues 70–130 lie on the Cytoplasmic side of the membrane; sequence DPGRYIFKDR…RNCVSMTTFP (61 aa). The region spanning 87-137 is the DHHC domain; the sequence is RWCNKCAAPKPPRAHHCRHCARCVPRMDHHCPWTRNCVSMTTFPHFLRFLI. The active-site S-palmitoyl cysteine intermediate is the Cys-117. A helical transmembrane segment spans residues 131–151; it reads HFLRFLIYTNMSLWMLGYFLW. Over 152–173 the chain is Lumenal; the sequence is QRFSKIWEHRRLPAYLGPSFYG. The helical transmembrane segment at 174-194 threads the bilayer; sequence LICLSLISIVNFVTTVALGIM. The Cytoplasmic portion of the chain corresponds to 195–437; the sequence is LINTVKSWVF…KILKKDGLDD (243 aa). The disordered stretch occupies residues 377–419; the sequence is LDQGLGWVNSDGDRLRDYGVDEEASEPEGVNDDDDDDDDDDVP. The span at 396 to 419 shows a compositional bias: acidic residues; the sequence is VDEEASEPEGVNDDDDDDDDDDVP.

Belongs to the DHHC palmitoyltransferase family. PFA4 subfamily.

It is found in the endoplasmic reticulum membrane. It catalyses the reaction L-cysteinyl-[protein] + hexadecanoyl-CoA = S-hexadecanoyl-L-cysteinyl-[protein] + CoA. Its function is as follows. Mediates the reversible addition of palmitate to target proteins, thereby regulating their membrane association and biological function. This chain is Palmitoyltransferase PFA4, found in Gibberella zeae (strain ATCC MYA-4620 / CBS 123657 / FGSC 9075 / NRRL 31084 / PH-1) (Wheat head blight fungus).